The following is a 271-amino-acid chain: Ribosomal RNA small subunit methyltransferase A (271 aa).

Residues histidine 11, leucine 13, glycine 38, glutamate 58, aspartate 86, and asparagine 101 each contribute to the S-adenosyl-L-methionine site.

Belongs to the class I-like SAM-binding methyltransferase superfamily. rRNA adenine N(6)-methyltransferase family. RsmA subfamily.

Its subcellular location is the cytoplasm. It catalyses the reaction adenosine(1518)/adenosine(1519) in 16S rRNA + 4 S-adenosyl-L-methionine = N(6)-dimethyladenosine(1518)/N(6)-dimethyladenosine(1519) in 16S rRNA + 4 S-adenosyl-L-homocysteine + 4 H(+). Functionally, specifically dimethylates two adjacent adenosines (A1518 and A1519) in the loop of a conserved hairpin near the 3'-end of 16S rRNA in the 30S particle. May play a critical role in biogenesis of 30S subunits. This Helicobacter pylori (strain J99 / ATCC 700824) (Campylobacter pylori J99) protein is Ribosomal RNA small subunit methyltransferase A.